The sequence spans 233 residues: Ribose-5-phosphate isomerase A (233 aa).

Residues 28–31 (TGST), 83–86 (DGAD), and 96–99 (KGGG) contribute to the substrate site. Residue glutamate 105 is the Proton acceptor of the active site. Lysine 123 contributes to the substrate binding site.

Belongs to the ribose 5-phosphate isomerase family. Homodimer.

It carries out the reaction aldehydo-D-ribose 5-phosphate = D-ribulose 5-phosphate. It functions in the pathway carbohydrate degradation; pentose phosphate pathway; D-ribose 5-phosphate from D-ribulose 5-phosphate (non-oxidative stage): step 1/1. Its function is as follows. Catalyzes the reversible conversion of ribose-5-phosphate to ribulose 5-phosphate. This chain is Ribose-5-phosphate isomerase A, found in Rhizobium rhizogenes (strain K84 / ATCC BAA-868) (Agrobacterium radiobacter).